A 629-amino-acid chain; its full sequence is 1-deoxy-D-xylulose-5-phosphate synthase (629 aa).

Thiamine diphosphate contacts are provided by residues H78 and 119–121 (AHS). D150 contacts Mg(2+). Residues 151–152 (GA), N179, Y286, and E368 each bind thiamine diphosphate. N179 lines the Mg(2+) pocket.

The protein belongs to the transketolase family. DXPS subfamily. As to quaternary structure, homodimer. It depends on Mg(2+) as a cofactor. Thiamine diphosphate is required as a cofactor.

The enzyme catalyses D-glyceraldehyde 3-phosphate + pyruvate + H(+) = 1-deoxy-D-xylulose 5-phosphate + CO2. It participates in metabolic intermediate biosynthesis; 1-deoxy-D-xylulose 5-phosphate biosynthesis; 1-deoxy-D-xylulose 5-phosphate from D-glyceraldehyde 3-phosphate and pyruvate: step 1/1. Its function is as follows. Catalyzes the acyloin condensation reaction between C atoms 2 and 3 of pyruvate and glyceraldehyde 3-phosphate to yield 1-deoxy-D-xylulose-5-phosphate (DXP). This chain is 1-deoxy-D-xylulose-5-phosphate synthase, found in Acidovorax ebreus (strain TPSY) (Diaphorobacter sp. (strain TPSY)).